The primary structure comprises 88 residues: Small ribosomal subunit protein uS15 (88 aa).

The protein belongs to the universal ribosomal protein uS15 family. Part of the 30S ribosomal subunit. Forms a bridge to the 50S subunit in the 70S ribosome, contacting the 23S rRNA.

Functionally, one of the primary rRNA binding proteins, it binds directly to 16S rRNA where it helps nucleate assembly of the platform of the 30S subunit by binding and bridging several RNA helices of the 16S rRNA. Its function is as follows. Forms an intersubunit bridge (bridge B4) with the 23S rRNA of the 50S subunit in the ribosome. The sequence is that of Small ribosomal subunit protein uS15 from Desulfitobacterium hafniense (strain Y51).